The following is a 300-amino-acid chain: Nucleotide-binding protein Daci_5422 (300 aa).

Gly10–Ser17 is a binding site for ATP. Asp59–Ser62 serves as a coordination point for GTP.

It belongs to the RapZ-like family.

Its function is as follows. Displays ATPase and GTPase activities. The chain is Nucleotide-binding protein Daci_5422 from Delftia acidovorans (strain DSM 14801 / SPH-1).